The following is a 220-amino-acid chain: Deoxyribose-phosphate aldolase (220 aa).

Asp89 functions as the Proton donor/acceptor in the catalytic mechanism. The active-site Schiff-base intermediate with acetaldehyde is Lys151. Lys180 acts as the Proton donor/acceptor in catalysis.

It belongs to the DeoC/FbaB aldolase family. DeoC type 1 subfamily.

The protein resides in the cytoplasm. The catalysed reaction is 2-deoxy-D-ribose 5-phosphate = D-glyceraldehyde 3-phosphate + acetaldehyde. It participates in carbohydrate degradation; 2-deoxy-D-ribose 1-phosphate degradation; D-glyceraldehyde 3-phosphate and acetaldehyde from 2-deoxy-alpha-D-ribose 1-phosphate: step 2/2. Catalyzes a reversible aldol reaction between acetaldehyde and D-glyceraldehyde 3-phosphate to generate 2-deoxy-D-ribose 5-phosphate. This is Deoxyribose-phosphate aldolase from Staphylococcus saprophyticus subsp. saprophyticus (strain ATCC 15305 / DSM 20229 / NCIMB 8711 / NCTC 7292 / S-41).